The primary structure comprises 238 residues: Purine nucleoside phosphorylase DeoD-type (238 aa).

Residue His-4 coordinates a purine D-ribonucleoside. Residues Gly-20, Arg-24, Arg-43, and 87-90 contribute to the phosphate site; that span reads RVGS. A purine D-ribonucleoside is bound by residues 179-181 and 203-204; these read EME and SD. The active-site Proton donor is the Asp-204.

This sequence belongs to the PNP/UDP phosphorylase family. Homohexamer; trimer of homodimers.

It carries out the reaction a purine D-ribonucleoside + phosphate = a purine nucleobase + alpha-D-ribose 1-phosphate. The enzyme catalyses a purine 2'-deoxy-D-ribonucleoside + phosphate = a purine nucleobase + 2-deoxy-alpha-D-ribose 1-phosphate. Its function is as follows. Catalyzes the reversible phosphorolytic breakdown of the N-glycosidic bond in the beta-(deoxy)ribonucleoside molecules, with the formation of the corresponding free purine bases and pentose-1-phosphate. This Histophilus somni (strain 2336) (Haemophilus somnus) protein is Purine nucleoside phosphorylase DeoD-type.